A 693-amino-acid polypeptide reads, in one-letter code: Protein FAM13A (693 aa).

Ser19 is modified (phosphoserine). Disordered stretches follow at residues 56-89 and 136-233; these read SNAG…KKQD and RSKP…VPDM. Positions 69–78 are enriched in polar residues; it reads GPSSASSIPT. A compositionally biased stretch (low complexity) spans 159 to 171; sequence LSMESLSSMQSQE. A compositionally biased stretch (basic and acidic residues) spans 184–197; sequence ESKEIERGGRDTQH. Residues Ser267 and Ser287 each carry the phosphoserine modification. 2 disordered regions span residues 302–331 and 396–424; these read DTEV…DEQE and ISEE…EKED. Ser397 is subject to Phosphoserine. Thr402 is modified (phosphothreonine). Over residues 408–418 the composition is skewed to polar residues; that stretch reads RSNTLPKSFGS.

This sequence belongs to the FAM13 family. Interacts with ANXA2. Expressed in the mammary gland, with similar levels at all stages of development, including pregnancy, lactation and involution.

Its function is as follows. (Microbial infection) Plays a role in the clearance of Pseudomonas aeruginosa by macrophages. In complex with ANXA2, promotes activation of Rho GTPases following P.aeruginosa infection. In Mus musculus (Mouse), this protein is Protein FAM13A (Fam13a).